The following is a 213-amino-acid chain: MGREFIPLFENWANSYDDTVVGRDLQYKEVFRDYDGILDDVVSRSGHKVLEFGVGTGNLTAKLLAAGKAVTGVEPSKAMREIAEAKLPENAVIVDGDFIDFPDPPFSPDTIVSSYAFHHLTNEEKREAVKRYGKMLGKHGKIVFADTVFKNREAFSAAVKKAKENGFLQLAEDLETEHYPTISEMETIFTSEHFSIAFQKHNDFVWVMEAAKL.

3 residues coordinate S-adenosyl-L-methionine: G53, E74, and D97.

The protein belongs to the methyltransferase superfamily. YrrT family.

Could be a S-adenosyl-L-methionine-dependent methyltransferase. This is an uncharacterized protein from Bacillus licheniformis (strain ATCC 14580 / DSM 13 / JCM 2505 / CCUG 7422 / NBRC 12200 / NCIMB 9375 / NCTC 10341 / NRRL NRS-1264 / Gibson 46).